The sequence spans 251 residues: Cell division protein ZapD (251 aa).

Belongs to the ZapD family. In terms of assembly, interacts with FtsZ.

It is found in the cytoplasm. Cell division factor that enhances FtsZ-ring assembly. Directly interacts with FtsZ and promotes bundling of FtsZ protofilaments, with a reduction in FtsZ GTPase activity. The chain is Cell division protein ZapD from Burkholderia lata (strain ATCC 17760 / DSM 23089 / LMG 22485 / NCIMB 9086 / R18194 / 383).